An 89-amino-acid polypeptide reads, in one-letter code: Cell division topological specificity factor (89 aa).

This sequence belongs to the MinE family.

Functionally, prevents the cell division inhibition by proteins MinC and MinD at internal division sites while permitting inhibition at polar sites. This ensures cell division at the proper site by restricting the formation of a division septum at the midpoint of the long axis of the cell. This Yersinia pestis bv. Antiqua (strain Angola) protein is Cell division topological specificity factor.